A 303-amino-acid polypeptide reads, in one-letter code: MAKVPPLIVICGTTASGKSQLALDLAQRLNAVILGADSRQIYKELDIGTAKPTLGDRQTVPHYLIDICEPTENFTLAEYQRQAQELIASLNQPILLVGGTGLYIQAIVKGLKIPAVPPQTNLREQLANLGQPFCYQLLSQVDPVAQSKIEPADVVRTLRALEVFYATGRPISSLQGENPPSYPIVQIGLGLEPEQLQPRIVHRTHAMVEAGLVKEVEGLINQYGEDLPLLHTLGYAEIKQYLQGQISLTQATESIIVHTRQFAKRQRTWFRKDSAIHWFDANQPNLLDSVTKLVQVDVNEGMF.

Residue 12–19 (GTTASGKS) participates in ATP binding. Substrate is bound at residue 14–19 (TASGKS). The tract at residues 37–40 (DSRQ) is interaction with substrate tRNA.

Belongs to the IPP transferase family. As to quaternary structure, monomer. Mg(2+) serves as cofactor.

It catalyses the reaction adenosine(37) in tRNA + dimethylallyl diphosphate = N(6)-dimethylallyladenosine(37) in tRNA + diphosphate. In terms of biological role, catalyzes the transfer of a dimethylallyl group onto the adenine at position 37 in tRNAs that read codons beginning with uridine, leading to the formation of N6-(dimethylallyl)adenosine (i(6)A). This is tRNA dimethylallyltransferase from Synechocystis sp. (strain ATCC 27184 / PCC 6803 / Kazusa).